A 359-amino-acid polypeptide reads, in one-letter code: Transaldolase (359 aa).

Catalysis depends on K139, which acts as the Schiff-base intermediate with substrate.

It belongs to the transaldolase family. Type 2 subfamily.

It is found in the cytoplasm. It catalyses the reaction D-sedoheptulose 7-phosphate + D-glyceraldehyde 3-phosphate = D-erythrose 4-phosphate + beta-D-fructose 6-phosphate. Its pathway is carbohydrate degradation; pentose phosphate pathway; D-glyceraldehyde 3-phosphate and beta-D-fructose 6-phosphate from D-ribose 5-phosphate and D-xylulose 5-phosphate (non-oxidative stage): step 2/3. In terms of biological role, transaldolase is important for the balance of metabolites in the pentose-phosphate pathway. This Thiobacillus denitrificans (strain ATCC 25259 / T1) protein is Transaldolase.